The following is a 676-amino-acid chain: Beta-galactosidase BgaP (676 aa).

Substrate is bound at residue Arg112. Cys116 provides a ligand contact to Zn(2+). Asn150 serves as a coordination point for substrate. Catalysis depends on Glu151, which acts as the Proton donor. Zn(2+)-binding residues include Cys156, Cys158, and Cys161. Catalysis depends on Glu308, which acts as the Nucleophile. Substrate contacts are provided by residues Trp316 and 356–359 (EKYH).

Belongs to the glycosyl hydrolase 42 family. Homodimer.

The enzyme catalyses Hydrolysis of terminal non-reducing beta-D-galactose residues in beta-D-galactosides.. Its activity is regulated as follows. No activity lost during treatment with 100 mM EDTA after 2 hours, and the addition of 1 mM MgCl(2), 1 mM CaCl(2) or 1 mM MnCl(2) has no effect. However, the enzyme activity is inhibited by Zn(2+), Cu(2+), Ni(2+) and Co(2+) to different extents. Addition of Na(+) or K(+) slightly stimulates the enzyme activity at low concentrations and the optimal concentration is 250 mM. A further increase of their concentration of ions above the optimum value results in a decrease in enzyme activity. The enzyme is still active even in the presence of Na(+) or K(+) at a concentration up to 5 M. Its function is as follows. Hydrolyzes lactose, o-nitrophenyl-beta-D-galactopyranoside (ONPG), p-nitrophenyl-beta-D-galactopyranoside (PNPG), 5-bromo-4-chloro-3-indolyl-beta-D-galactopyranoside (X-gal), o-nitrophenyl-beta-D-fucopyranoside, p-nitrophenyl-beta-D-mannoside, o-nitrophenyl-beta-D-glucoside, p-nitrophenyl-beta-D-xyloside, p-nitrophenyl-beta-D-cellobioside, p-nitrophenyl-beta-D-arabinoside, p-nitrophenyl-beta-D-lactoside, p-nitrophenyl-beta-D-galacturonide, p-nitrophenyl-beta-D-glucuronide and p-nitrophenyl-alpha-D-galactoside with highest level of activity with ONPG as substrate, intermediate level of activity with PNPG and lower levels of activity with all other chromogenic nitrophenyl analogs. Able to hydrolyze 34% of milk lactose after 60 minutes at 5 degrees Celsius. This Planococcus sp. (strain L4) protein is Beta-galactosidase BgaP.